Consider the following 373-residue polypeptide: tRNA-specific 2-thiouridylase MnmA (373 aa).

Residues 12 to 19 (GMSGGVDS) and Met-38 contribute to the ATP site. Residues 98 to 100 (NPD) are interaction with target base in tRNA. Cys-103 acts as the Nucleophile in catalysis. Cys-103 and Cys-200 are joined by a disulfide. Position 127 (Gly-127) interacts with ATP. The segment at 150-152 (KDQ) is interaction with tRNA. The active-site Cysteine persulfide intermediate is Cys-200. An interaction with tRNA region spans residues 312–313 (RY).

This sequence belongs to the MnmA/TRMU family.

The protein localises to the cytoplasm. The catalysed reaction is S-sulfanyl-L-cysteinyl-[protein] + uridine(34) in tRNA + AH2 + ATP = 2-thiouridine(34) in tRNA + L-cysteinyl-[protein] + A + AMP + diphosphate + H(+). Functionally, catalyzes the 2-thiolation of uridine at the wobble position (U34) of tRNA, leading to the formation of s(2)U34. This is tRNA-specific 2-thiouridylase MnmA from Streptococcus pyogenes serotype M18 (strain MGAS8232).